We begin with the raw amino-acid sequence, 99 residues long: uncharacterized protein (99 aa).

The protein resides in the host cytoplasm. This is an uncharacterized protein from Escherichia phage Mu (Bacteriophage Mu).